The sequence spans 415 residues: uncharacterized protein (415 aa).

Positions 1–55 (MSTGTVTIDRLGAQGDGVARTEAGPVFAPFTLPGETVSLAVNKANGTLISLKEAS) constitute a TRAM domain. [4Fe-4S] cluster-binding residues include Cys-63, Cys-75, Cys-78, and Cys-152. S-adenosyl-L-methionine-binding residues include Gln-252, Phe-279, Glu-299, and Asp-347. Cys-373 (nucleophile) is an active-site residue.

This sequence belongs to the class I-like SAM-binding methyltransferase superfamily. RNA M5U methyltransferase family.

This is an uncharacterized protein from Rhizobium meliloti (strain 1021) (Ensifer meliloti).